The chain runs to 113 residues: Large ribosomal subunit protein bL19 (113 aa).

Belongs to the bacterial ribosomal protein bL19 family.

In terms of biological role, this protein is located at the 30S-50S ribosomal subunit interface and may play a role in the structure and function of the aminoacyl-tRNA binding site. This Corynebacterium efficiens (strain DSM 44549 / YS-314 / AJ 12310 / JCM 11189 / NBRC 100395) protein is Large ribosomal subunit protein bL19.